A 72-amino-acid polypeptide reads, in one-letter code: Galensin (72 aa).

Positions 1–22 (MLTLKKSMLLLFFLGLVSVSLA) are cleaved as a signal peptide. Residues 23-48 (DDKREDEAEEGEDKRAAEEERNVEKR) constitute a propeptide that is removed on maturation. F71 carries the post-translational modification Phenylalanine amide.

It belongs to the frog skin active peptide (FSAP) family. Brevinin subfamily. Homodimer; disulfide-linked. As to expression, expressed by the skin glands.

It is found in the secreted. Antibacterial activity against the Gram-positive bacterium M.luteus and the Gram-negative bacterium E.coli. The polypeptide is Galensin (Kassina senegalensis (Senegal running frog)).